The following is a 489-amino-acid chain: Probable 26S proteasome non-ATPase regulatory subunit 3 (489 aa).

Positions 1–23 (MTQDVEMKEVPAPAPSNSVTAAT) are disordered. Residues 241-422 (CRYLFYLGKI…GWMVSKETGD (182 aa)) form the PCI domain. Residues 454 to 489 (PANSHKDKESAEKRRERQQQEQELAKHIAEEDDDEF) form a disordered region. Residues 457–482 (SHKDKESAEKRRERQQQEQELAKHIA) are compositionally biased toward basic and acidic residues.

It belongs to the proteasome subunit S3 family. In terms of assembly, the 26S proteasome is composed of a core protease, known as the 20S proteasome, capped at one or both ends by the 19S regulatory complex (RC). The RC is composed of at least 18 different subunits in two subcomplexes, the base and the lid, which form the portions proximal and distal to the 20S proteolytic core, respectively.

It localises to the nucleus. Its function is as follows. Acts as a regulatory subunit of the 26 proteasome which is involved in the ATP-dependent degradation of ubiquitinated proteins. This chain is Probable 26S proteasome non-ATPase regulatory subunit 3 (21D7), found in Daucus carota (Wild carrot).